Consider the following 60-residue polypeptide: Large ribosomal subunit protein uL30 (60 aa).

This sequence belongs to the universal ribosomal protein uL30 family. In terms of assembly, part of the 50S ribosomal subunit.

This Azoarcus sp. (strain BH72) protein is Large ribosomal subunit protein uL30.